The primary structure comprises 359 residues: Protein mab-21-like 2 (359 aa).

It belongs to the mab-21 family.

The protein resides in the nucleus. It is found in the cytoplasm. Its function is as follows. Required for eye morphogenesis. May promote the survival of proliferating retinal progenitor cells. This is Protein mab-21-like 2 (mab21l2) from Danio rerio (Zebrafish).